A 585-amino-acid polypeptide reads, in one-letter code: Pyruvate kinase (585 aa).

Substrate is bound at residue R32. 4 residues coordinate K(+): N34, S36, D66, and T67. 34 to 37 (NFSH) provides a ligand contact to ATP. Positions 73 and 156 each coordinate ATP. E221 contributes to the Mg(2+) binding site. Residues G244, D245, and T277 each coordinate substrate. D245 provides a ligand contact to Mg(2+).

Belongs to the pyruvate kinase family. This sequence in the C-terminal section; belongs to the PEP-utilizing enzyme family. Mg(2+) serves as cofactor. The cofactor is K(+).

It carries out the reaction pyruvate + ATP = phosphoenolpyruvate + ADP + H(+). Its pathway is carbohydrate degradation; glycolysis; pyruvate from D-glyceraldehyde 3-phosphate: step 5/5. This chain is Pyruvate kinase (pyk), found in Staphylococcus aureus (strain bovine RF122 / ET3-1).